The following is a 130-amino-acid chain: Small ribosomal subunit protein uS8 (130 aa).

The protein belongs to the universal ribosomal protein uS8 family. Part of the 30S ribosomal subunit.

One of the primary rRNA binding proteins, it binds directly to 16S rRNA central domain where it helps coordinate assembly of the platform of the 30S subunit. This chain is Small ribosomal subunit protein uS8, found in Pyrococcus abyssi (strain GE5 / Orsay).